The chain runs to 307 residues: tRNA N6-adenosine threonylcarbamoyltransferase (307 aa).

2 residues coordinate Fe cation: histidine 108 and histidine 112. Substrate contacts are provided by residues 131–135 (IVSGG), aspartate 164, glycine 177, aspartate 181, and asparagine 266. A Fe cation-binding site is contributed by aspartate 290.

The protein belongs to the KAE1 / TsaD family. Fe(2+) is required as a cofactor.

It is found in the cytoplasm. The catalysed reaction is L-threonylcarbamoyladenylate + adenosine(37) in tRNA = N(6)-L-threonylcarbamoyladenosine(37) in tRNA + AMP + H(+). In terms of biological role, required for the formation of a threonylcarbamoyl group on adenosine at position 37 (t(6)A37) in tRNAs that read codons beginning with adenine. Is involved in the transfer of the threonylcarbamoyl moiety of threonylcarbamoyl-AMP (TC-AMP) to the N6 group of A37, together with TsaE and TsaB. TsaD likely plays a direct catalytic role in this reaction. The polypeptide is tRNA N6-adenosine threonylcarbamoyltransferase (Mycoplasmopsis synoviae (strain 53) (Mycoplasma synoviae)).